The following is a 389-amino-acid chain: Probable nitrate transporter NarT (389 aa).

Helical transmembrane passes span 14–34 (TLSL…MPFI), 45–65 (ISII…PFGY), 69–89 (IVGA…PIFF), 97–117 (GMLM…SVGV), 139–159 (GNIG…IIGW), 161–181 (TTVR…FIFG), 211–231 (WYFI…NYLV), 246–266 (GVFI…GDKF), 268–288 (AVKV…ILGI), 294–314 (LFTV…GLIF), 331–351 (IVSM…TYVA), and 353–373 (LTGS…IALF).

It belongs to the major facilitator superfamily. Nitrate/nitrite porter (TC 2.A.1.8) family.

Its subcellular location is the cell membrane. In terms of biological role, probably required for nitrate uptake under anoxic conditions. Also possibly involved in excretion of nitrite produced by the dissimilatory reduction of nitrate. The polypeptide is Probable nitrate transporter NarT (narT) (Staphylococcus aureus (strain USA300)).